The sequence spans 585 residues: Formate--tetrahydrofolate ligase (585 aa).

Residue 74-81 participates in ATP binding; it reads TPLGEGKT.

It belongs to the formate--tetrahydrofolate ligase family.

It catalyses the reaction (6S)-5,6,7,8-tetrahydrofolate + formate + ATP = (6R)-10-formyltetrahydrofolate + ADP + phosphate. Its pathway is one-carbon metabolism; tetrahydrofolate interconversion. This Yersinia enterocolitica serotype O:8 / biotype 1B (strain NCTC 13174 / 8081) protein is Formate--tetrahydrofolate ligase.